Consider the following 251-residue polypeptide: 3-deoxy-manno-octulosonate cytidylyltransferase (251 aa).

Belongs to the KdsB family.

The protein resides in the cytoplasm. It carries out the reaction 3-deoxy-alpha-D-manno-oct-2-ulosonate + CTP = CMP-3-deoxy-beta-D-manno-octulosonate + diphosphate. It functions in the pathway nucleotide-sugar biosynthesis; CMP-3-deoxy-D-manno-octulosonate biosynthesis; CMP-3-deoxy-D-manno-octulosonate from 3-deoxy-D-manno-octulosonate and CTP: step 1/1. Its pathway is bacterial outer membrane biogenesis; lipopolysaccharide biosynthesis. In terms of biological role, activates KDO (a required 8-carbon sugar) for incorporation into bacterial lipopolysaccharide in Gram-negative bacteria. The sequence is that of 3-deoxy-manno-octulosonate cytidylyltransferase from Parabacteroides distasonis (strain ATCC 8503 / DSM 20701 / CIP 104284 / JCM 5825 / NCTC 11152).